Here is a 79-residue protein sequence, read N- to C-terminus: D-alanyl carrier protein (79 aa).

The region spanning 1–77 is the Carrier domain; sequence MDTKQAVLDI…KIIAKVESLR (77 aa). An O-(pantetheine 4'-phosphoryl)serine modification is found at S35.

Belongs to the DltC family. In terms of processing, 4'-phosphopantetheine is transferred from CoA to a specific serine of apo-DCP.

The protein resides in the cytoplasm. It functions in the pathway cell wall biogenesis; lipoteichoic acid biosynthesis. In terms of biological role, carrier protein involved in the D-alanylation of lipoteichoic acid (LTA). The loading of thioester-linked D-alanine onto DltC is catalyzed by D-alanine--D-alanyl carrier protein ligase DltA. The DltC-carried D-alanyl group is further transferred to cell membrane phosphatidylglycerol (PG) by forming an ester bond, probably catalyzed by DltD. D-alanylation of LTA plays an important role in modulating the properties of the cell wall in Gram-positive bacteria, influencing the net charge of the cell wall. This Lactobacillus gasseri (strain ATCC 33323 / DSM 20243 / BCRC 14619 / CIP 102991 / JCM 1131 / KCTC 3163 / NCIMB 11718 / NCTC 13722 / AM63) protein is D-alanyl carrier protein.